Here is a 226-residue protein sequence, read N- to C-terminus: Large ribosomal subunit protein uL1 (226 aa).

It belongs to the universal ribosomal protein uL1 family. As to quaternary structure, part of the 50S ribosomal subunit.

Its function is as follows. Binds directly to 23S rRNA. The L1 stalk is quite mobile in the ribosome, and is involved in E site tRNA release. In terms of biological role, protein L1 is also a translational repressor protein, it controls the translation of the L11 operon by binding to its mRNA. This chain is Large ribosomal subunit protein uL1, found in Borreliella afzelii (strain PKo) (Borrelia afzelii).